The following is a 102-amino-acid chain: uncharacterized protein (102 aa).

Residues 1-41 are disordered; that stretch reads MAAPRQIAFYGKGGTGKPKRKPEPVTASKEDRCLGSPSKNK.

This sequence to the N-terminal of nitrogenase iron protein (NifH). Has lost the ATP-binding site.

This protein is either not expressed, expressed at low levels or rapidly degraded. This is an uncharacterized protein from Rhizobium meliloti (Ensifer meliloti).